Reading from the N-terminus, the 425-residue chain is Serine--tRNA ligase (425 aa).

231–233 contributes to the L-serine binding site; the sequence is TAE. Position 262 to 264 (262 to 264) interacts with ATP; sequence RSE. Glu-285 contributes to the L-serine binding site. Residue 349–352 participates in ATP binding; sequence EISS. Residue Ser-385 participates in L-serine binding.

It belongs to the class-II aminoacyl-tRNA synthetase family. Type-1 seryl-tRNA synthetase subfamily. Homodimer. The tRNA molecule binds across the dimer.

It is found in the cytoplasm. The enzyme catalyses tRNA(Ser) + L-serine + ATP = L-seryl-tRNA(Ser) + AMP + diphosphate + H(+). It carries out the reaction tRNA(Sec) + L-serine + ATP = L-seryl-tRNA(Sec) + AMP + diphosphate + H(+). It functions in the pathway aminoacyl-tRNA biosynthesis; selenocysteinyl-tRNA(Sec) biosynthesis; L-seryl-tRNA(Sec) from L-serine and tRNA(Sec): step 1/1. Its function is as follows. Catalyzes the attachment of serine to tRNA(Ser). Is also able to aminoacylate tRNA(Sec) with serine, to form the misacylated tRNA L-seryl-tRNA(Sec), which will be further converted into selenocysteinyl-tRNA(Sec). The chain is Serine--tRNA ligase from Desulfosudis oleivorans (strain DSM 6200 / JCM 39069 / Hxd3) (Desulfococcus oleovorans).